We begin with the raw amino-acid sequence, 364 residues long: Pre-small/secreted glycoprotein (364 aa).

The N-terminal stretch at 1–32 (MGVTGILQLPRDRFKRTSFFLWVIILFQRTFS) is a signal peptide. A glycan (N-linked (GlcNAc...) asparagine; by host) is linked at asparagine 40. 2 cysteine pairs are disulfide-bonded: cysteine 108-cysteine 135 and cysteine 121-cysteine 147. Asparagine 204, asparagine 228, asparagine 238, asparagine 257, and asparagine 268 each carry an N-linked (GlcNAc...) asparagine; by host glycan.

The protein belongs to the filoviruses glycoprotein family. As to quaternary structure, homodimer; disulfide-linked. The homodimers are linked by two disulfide bonds in a parallel orientation. Monomer. Post-translationally, this precursor is processed into mature sGP and delta-peptide by host furin or furin-like proteases. The cleavage site corresponds to the furin optimal cleavage sequence [KR]-X-[KR]-R. In terms of processing, N-glycosylated. O-glycosylated.

The protein resides in the secreted. In terms of biological role, seems to possess an anti-inflammatory activity as it can reverse the barrier-decreasing effects of TNF alpha. Might therefore contribute to the lack of inflammatory reaction seen during infection in spite the of extensive necrosis and massive virus production. Does not seem to be involved in activation of primary macrophages. Does not seem to interact specifically with neutrophils. Its function is as follows. Viroporin that permeabilizes mammalian cell plasma membranes. It acts by altering permeation of ionic compounds and small molecules. This activity may lead to viral enterotoxic activity. This is Pre-small/secreted glycoprotein (GP) from Zaire ebolavirus (strain Gabon-94) (ZEBOV).